The primary structure comprises 387 residues: UDP-N-acetylglucosamine--N-acetylmuramyl-(pentapeptide) pyrophosphoryl-undecaprenol N-acetylglucosamine transferase (387 aa).

The disordered stretch occupies residues 1–22 (MSEHVRSAGPPQASTAPSGGSA). Residues 41–43 (TGG), N158, R194, S222, I276, and Q321 each bind UDP-N-acetyl-alpha-D-glucosamine.

It belongs to the glycosyltransferase 28 family. MurG subfamily.

The protein resides in the cell inner membrane. It catalyses the reaction di-trans,octa-cis-undecaprenyl diphospho-N-acetyl-alpha-D-muramoyl-L-alanyl-D-glutamyl-meso-2,6-diaminopimeloyl-D-alanyl-D-alanine + UDP-N-acetyl-alpha-D-glucosamine = di-trans,octa-cis-undecaprenyl diphospho-[N-acetyl-alpha-D-glucosaminyl-(1-&gt;4)]-N-acetyl-alpha-D-muramoyl-L-alanyl-D-glutamyl-meso-2,6-diaminopimeloyl-D-alanyl-D-alanine + UDP + H(+). The protein operates within cell wall biogenesis; peptidoglycan biosynthesis. Cell wall formation. Catalyzes the transfer of a GlcNAc subunit on undecaprenyl-pyrophosphoryl-MurNAc-pentapeptide (lipid intermediate I) to form undecaprenyl-pyrophosphoryl-MurNAc-(pentapeptide)GlcNAc (lipid intermediate II). This chain is UDP-N-acetylglucosamine--N-acetylmuramyl-(pentapeptide) pyrophosphoryl-undecaprenol N-acetylglucosamine transferase, found in Polaromonas sp. (strain JS666 / ATCC BAA-500).